The sequence spans 133 residues: Profilin (133 aa).

This sequence belongs to the profilin family. Occurs in many kinds of cells as a complex with monomeric actin in a 1:1 ratio.

The protein resides in the cytoplasm. It localises to the cytoskeleton. In terms of biological role, binds to actin and affects the structure of the cytoskeleton. At high concentrations, profilin prevents the polymerization of actin, whereas it enhances it at low concentrations. By binding to PIP2, it inhibits the formation of IP3 and DG. In Mercurialis annua (Annual mercury), this protein is Profilin.